The following is a 719-amino-acid chain: Polyribonucleotide nucleotidyltransferase (719 aa).

Mg(2+) contacts are provided by Asp-491 and Asp-497. The region spanning 558–617 is the KH domain; that stretch reads PRMLTIKINPEKIRDVIGKGGATIRALTEETGTQIDISDDGTIVIASVDEAQAKEAQRRI. An S1 motif domain is found at 627–695; that stretch reads GQVYDGSVLR…DKGRLRLSVK (69 aa).

It belongs to the polyribonucleotide nucleotidyltransferase family. It depends on Mg(2+) as a cofactor.

It is found in the cytoplasm. It carries out the reaction RNA(n+1) + phosphate = RNA(n) + a ribonucleoside 5'-diphosphate. Functionally, involved in mRNA degradation. Catalyzes the phosphorolysis of single-stranded polyribonucleotides processively in the 3'- to 5'-direction. The protein is Polyribonucleotide nucleotidyltransferase of Bordetella petrii (strain ATCC BAA-461 / DSM 12804 / CCUG 43448).